A 201-amino-acid chain; its full sequence is 3-isopropylmalate dehydratase small subunit (201 aa).

This sequence belongs to the LeuD family. LeuD type 1 subfamily. Heterodimer of LeuC and LeuD.

The catalysed reaction is (2R,3S)-3-isopropylmalate = (2S)-2-isopropylmalate. It functions in the pathway amino-acid biosynthesis; L-leucine biosynthesis; L-leucine from 3-methyl-2-oxobutanoate: step 2/4. Functionally, catalyzes the isomerization between 2-isopropylmalate and 3-isopropylmalate, via the formation of 2-isopropylmaleate. This chain is 3-isopropylmalate dehydratase small subunit, found in Escherichia coli O45:K1 (strain S88 / ExPEC).